Reading from the N-terminus, the 345-residue chain is Uroporphyrinogen decarboxylase (345 aa).

Substrate contacts are provided by residues 27-31 (RQAGR), Asp77, Tyr152, Ser207, and His323.

This sequence belongs to the uroporphyrinogen decarboxylase family. Homodimer.

Its subcellular location is the cytoplasm. It catalyses the reaction uroporphyrinogen III + 4 H(+) = coproporphyrinogen III + 4 CO2. Its pathway is porphyrin-containing compound metabolism; protoporphyrin-IX biosynthesis; coproporphyrinogen-III from 5-aminolevulinate: step 4/4. Its function is as follows. Catalyzes the decarboxylation of four acetate groups of uroporphyrinogen-III to yield coproporphyrinogen-III. The polypeptide is Uroporphyrinogen decarboxylase (Maricaulis maris (strain MCS10) (Caulobacter maris)).